A 312-amino-acid chain; its full sequence is MGRTTSEGIHGFVDDLEPKSSILDKVGDFITVNTKRHDGREDFNEQNDELNSQENHNSSENGNENENEQDSLALDDLDRAFELVEGMDMDWMMPSHAHHSPATTATIKPRLLYSPLIHTQSAVPVTISPNLVATATSTTSANKVTKNKSNSSPYLNKRRGKPGPDSATSLFELPDSVIPTPKPKPKPKQYPKVILPSNSTRRVSPVTAKTSSSAEGVVVASESPVIAPHGSSHSRSLSKRRSSGALVDDDKRESHKHAEQARRNRLAVALHELASLIPAEWKQQNVSAAPSKATTVEAACRYIRHLQQNVST.

The interaction with PHO80 stretch occupies residues 1–31 (MGRTTSEGIHGFVDDLEPKSSILDKVGDFIT). Positions 35–71 (KRHDGREDFNEQNDELNSQENHNSSENGNENENEQDS) are disordered. Residues 49–62 (ELNSQENHNSSENG) are compositionally biased toward low complexity. A 9aaTAD motif is present at residues 75 to 83 (DDLDRAFEL). The tract at residues 75-99 (DDLDRAFELVEGMDMDWMMPSHAHH) is transcription activation domain. Phosphoserine; by PHO85 occurs at positions 100, 114, 128, and 152. 2 stretches are compositionally biased toward polar residues: residues 138–154 (TTSANKVTKNKSNSSPY) and 196–210 (PSNSTRRVSPVTAKT). The disordered stretch occupies residues 138 to 259 (TTSANKVTKN…DKRESHKHAE (122 aa)). Residues 140–166 (SANKVTKNKSNSSPYLNKRRGKPGPDS) carry the Nuclear localization signal motif. The tract at residues 156-200 (NKRRGKPGPDSATSLFELPDSVIPTPKPKPKPKQYPKVILPSNST) is interaction with PHO80. The interval 201-218 (RRVSPVTAKTSSSAEGVV) is interaction with PHO2. The segment at 203–227 (VSPVTAKTSSSAEGVVVASESPVIA) is involved in oligomerization. The residue at position 204 (serine 204) is a Phosphoserine. Positions 211–235 (SSSAEGVVVASESPVIAPHGSSHSR) are enriched in low complexity. Serine 223 carries the phosphoserine; by PHO85 modification. Serine 242 and serine 243 each carry phosphoserine. Residues 248–259 (DDDKRESHKHAE) show a composition bias toward basic and acidic residues. One can recognise a bHLH domain in the interval 250 to 306 (DKRESHKHAEQARRNRLAVALHELASLIPAEWKQQNVSAAPSKATTVEAACRYIRHL).

Binds DNA as a homodimer. Interacts with transcription factor PHO2 and binds cooperatively to PHO5 UAS. Interacts with the cyclin-CDK PHO80-PHO85 and the CDK inhibitor (CKI) PHO81. In terms of processing, phosphorylated by the cyclin-CDK PHO80-PHO85 at five residues under high-phosphate conditions, preventing PHO4 from activating the structural PHO genes. Phosphorylation of Ser-114 and Ser-128 promotes nuclear export. Phosphorylation of Ser-152 decreases nuclear import. Phosphorylation of Ser-223 decreases the binding affinity for PHO2.

The protein localises to the cytoplasm. The protein resides in the nucleus. Its function is as follows. Transcriptional activator that regulates the expression of repressible phosphatase under phosphate starvation conditions. Binds to the upstream activating sequence (UAS) of several phosphatase encoding PHO genes. Inhibited by the cyclin-CDK PHO80-PHO85 under high-phosphate conditions. This chain is Phosphate system positive regulatory protein PHO4 (PHO4), found in Saccharomyces cerevisiae (strain ATCC 204508 / S288c) (Baker's yeast).